A 229-amino-acid chain; its full sequence is 5'-methylthioadenosine/S-adenosylhomocysteine nucleosidase (229 aa).

The active-site Proton acceptor is Glu-12. Substrate is bound by residues Gly-78, Ile-152, and 173–174 (ME). The Proton donor role is filled by Asp-197.

It belongs to the PNP/UDP phosphorylase family. MtnN subfamily.

It catalyses the reaction S-adenosyl-L-homocysteine + H2O = S-(5-deoxy-D-ribos-5-yl)-L-homocysteine + adenine. The enzyme catalyses S-methyl-5'-thioadenosine + H2O = 5-(methylsulfanyl)-D-ribose + adenine. It carries out the reaction 5'-deoxyadenosine + H2O = 5-deoxy-D-ribose + adenine. Its pathway is amino-acid biosynthesis; L-methionine biosynthesis via salvage pathway; S-methyl-5-thio-alpha-D-ribose 1-phosphate from S-methyl-5'-thioadenosine (hydrolase route): step 1/2. Catalyzes the irreversible cleavage of the glycosidic bond in both 5'-methylthioadenosine (MTA) and S-adenosylhomocysteine (SAH/AdoHcy) to adenine and the corresponding thioribose, 5'-methylthioribose and S-ribosylhomocysteine, respectively. Also cleaves 5'-deoxyadenosine, a toxic by-product of radical S-adenosylmethionine (SAM) enzymes, into 5-deoxyribose and adenine. This is 5'-methylthioadenosine/S-adenosylhomocysteine nucleosidase from Histophilus somni (strain 2336) (Haemophilus somnus).